We begin with the raw amino-acid sequence, 213 residues long: Probable thiopurine S-methyltransferase (213 aa).

The S-adenosyl-L-methionine site is built by tryptophan 10, leucine 45, glutamate 66, and arginine 125.

Belongs to the class I-like SAM-binding methyltransferase superfamily. TPMT family.

Its subcellular location is the cytoplasm. The enzyme catalyses S-adenosyl-L-methionine + a thiopurine = S-adenosyl-L-homocysteine + a thiopurine S-methylether.. The polypeptide is Probable thiopurine S-methyltransferase (Yarrowia lipolytica (strain CLIB 122 / E 150) (Yeast)).